A 171-amino-acid polypeptide reads, in one-letter code: Large ribosomal subunit protein uL10 (171 aa).

The protein belongs to the universal ribosomal protein uL10 family. In terms of assembly, part of the ribosomal stalk of the 50S ribosomal subunit. The N-terminus interacts with L11 and the large rRNA to form the base of the stalk. The C-terminus forms an elongated spine to which L12 dimers bind in a sequential fashion forming a multimeric L10(L12)X complex.

Forms part of the ribosomal stalk, playing a central role in the interaction of the ribosome with GTP-bound translation factors. The protein is Large ribosomal subunit protein uL10 of Erythrobacter litoralis (strain HTCC2594).